Consider the following 78-residue polypeptide: MSEVVIKEQLEQYISKIERLEQEKADLSQEVKDIFQDASSHGFDVKAMKSILKLKKLDKDKLAEQDAMLELYRDTLGI.

Belongs to the UPF0335 family.

This Rickettsia rickettsii (strain Iowa) protein is UPF0335 protein RrIowa_0193.